The primary structure comprises 295 residues: Small ribosomal subunit protein uS2 (295 aa).

Residues 232-295 (RRRGTDEKPE…DEQPAAAAAE (64 aa)) are disordered. Positions 252-287 (EWERELLEEPKKSDEQPAKSDELPVKTDEQPTKSDE) are enriched in basic and acidic residues.

The protein belongs to the universal ribosomal protein uS2 family.

In Salinispora tropica (strain ATCC BAA-916 / DSM 44818 / JCM 13857 / NBRC 105044 / CNB-440), this protein is Small ribosomal subunit protein uS2.